Here is a 524-residue protein sequence, read N- to C-terminus: M-phase inducer phosphatase 1 (524 aa).

Residues 74-84 carry the Phosphodegron motif; the sequence is MGSSESTDSGF. Position 76 is a phosphoserine; by CHEK1 (Ser76). Residues Ser79, Ser82, and Ser88 each carry the phosphoserine; by NEK11 modification. Ser107 carries the post-translational modification Phosphoserine. Ser124 is modified (phosphoserine; by CHEK1 and CHEK2). A KEN box motif is present at residues 141–143; sequence KEN. Ser178 is subject to Phosphoserine; by CHEK1. Residues 264–317 are disordered; the sequence is LCSSSTRSVLKRPERSQEESPPGSTKRRKSMSGASPKESTNPEKAHETLHQSLS. Phosphoserine; by CHEK1 and CHEK2 is present on residues Ser279 and Ser293. Basic and acidic residues predominate over residues 303–312; that stretch reads TNPEKAHETL. Ser321 is subject to Phosphoserine. In terms of domain architecture, Rhodanese spans 376 to 482; that stretch reads LIKEFVIIDC…FFMKCQSYCE (107 aa). The active site involves Cys431. Thr507 bears the Phosphothreonine; by CHEK1 mark. Phosphoserine; by PLK3 is present on residues Ser513 and Ser519.

This sequence belongs to the MPI phosphatase family. Interacts with CCNB1/cyclin B1. Interacts with YWHAE/14-3-3 epsilon when phosphorylated. Interacts with CUL1 specifically when CUL1 is neddylated and active. Interacts with BTRC/BTRCP1 and FBXW11/BTRCP2. Interactions with CUL1, BTRC and FBXW11 are enhanced upon DNA damage. Interacts with CHEK2; mediates CDC25A phosphorylation and degradation in response to infrared-induced DNA damages. Interacts with HSP90AB1; prevents heat shock-mediated CDC25A degradation and contributes to cell cycle progression. Post-translationally, phosphorylated by CHEK1 on Ser-76, Ser-124, Ser-178, Ser-279, Ser-293 and Thr-507 during checkpoint mediated cell cycle arrest. Also phosphorylated by CHEK2 on Ser-124, Ser-279, and Ser-293 during checkpoint mediated cell cycle arrest. Phosphorylation on Ser-178 and Thr-507 creates binding sites for YWHAE/14-3-3 epsilon which inhibits CDC25A. Phosphorylation on Ser-76, Ser-124, Ser-178, Ser-279 and Ser-293 may also promote ubiquitin-dependent proteolysis of CDC25A by the SCF complex. Phosphorylation of CDC25A at Ser-76 by CHEK1 primes it for subsequent phosphorylation at Ser-79, Ser-82 and Ser-88 by NEK11. Phosphorylation by NEK11 is required for BTRC-mediated polyubiquitination and degradation. Phosphorylation by PIM1 leads to an increase in phosphatase activity. Phosphorylated by PLK3 following DNA damage, leading to promote its ubiquitination and degradation. In terms of processing, ubiquitinated by the anaphase promoting complex/cyclosome (APC/C) ubiquitin ligase complex that contains FZR1/CDH1 during G1 phase leading to its degradation by the proteasome. Ubiquitinated by a SCF complex containing BTRC and FBXW11 during S phase leading to its degradation by the proteasome. Deubiquitination by USP17L2/DUB3 leads to its stabilization.

It carries out the reaction O-phospho-L-tyrosyl-[protein] + H2O = L-tyrosyl-[protein] + phosphate. With respect to regulation, stimulated by B-type cyclins. Stimulated by PIM1-mediated phosphorylation. Functionally, tyrosine protein phosphatase which functions as a dosage-dependent inducer of mitotic progression. Directly dephosphorylates CDK1 and stimulates its kinase activity. Also dephosphorylates CDK2 in complex with cyclin-E, in vitro. The protein is M-phase inducer phosphatase 1 (CDC25A) of Homo sapiens (Human).